The primary structure comprises 509 residues: Protein WHAT'S THIS FACTOR 1 homolog, chloroplastic (509 aa).

A chloroplast-targeting transit peptide spans 1–56; the sequence is MDAKLLLLPFPSPPATLHHHPPPPKSLFLGASLPLLHPPPPLRLLRPGAPRRLAVV. Residues 65 to 393 enclose the PORR domain; it reads KEIPFDNVIQ…LKEKMRALVA (329 aa). 2 disordered regions span residues 402-431 and 444-509; these read VPATSEEADRTNGAAQMLSEGSDVEDDEDE and SGGK…RERW. Over residues 461-474 the composition is skewed to acidic residues; that stretch reads ENDDSPPDFEDDDG.

It is found in the plastid. Its subcellular location is the chloroplast. In terms of biological role, RNA-binding protein involved in group II intron splicing. Binds specific group II introns and promotes their splicing. Functions in the context of a heterodimer with the ribonuclease III domain-containing protein RNC1. The chain is Protein WHAT'S THIS FACTOR 1 homolog, chloroplastic from Oryza sativa subsp. japonica (Rice).